The sequence spans 520 residues: Probable cytosol aminopeptidase (520 aa).

Mn(2+)-binding residues include K232 and D237. K244 is a catalytic residue. D255, D314, and E316 together coordinate Mn(2+). R318 is a catalytic residue. Residues 488–520 (KAKKSTAKKATTKKTTTRKTASKTKSTKSKARK) form a disordered region.

It belongs to the peptidase M17 family. Requires Mn(2+) as cofactor.

It localises to the cytoplasm. It carries out the reaction Release of an N-terminal amino acid, Xaa-|-Yaa-, in which Xaa is preferably Leu, but may be other amino acids including Pro although not Arg or Lys, and Yaa may be Pro. Amino acid amides and methyl esters are also readily hydrolyzed, but rates on arylamides are exceedingly low.. It catalyses the reaction Release of an N-terminal amino acid, preferentially leucine, but not glutamic or aspartic acids.. In terms of biological role, presumably involved in the processing and regular turnover of intracellular proteins. Catalyzes the removal of unsubstituted N-terminal amino acids from various peptides. The chain is Probable cytosol aminopeptidase (pepA) from Metamycoplasma salivarium (Mycoplasma salivarium).